Consider the following 326-residue polypeptide: Undecaprenyl-phosphate 4-deoxy-4-formamido-L-arabinose transferase (326 aa).

The next 2 helical transmembrane spans lie at 234–254 (LLSIVGSVVAGIGFTFSILLI) and 269–289 (VFTLFAILFTFVGVQLLGMGL).

Belongs to the glycosyltransferase 2 family.

It localises to the cell inner membrane. The enzyme catalyses UDP-4-deoxy-4-formamido-beta-L-arabinose + di-trans,octa-cis-undecaprenyl phosphate = 4-deoxy-4-formamido-alpha-L-arabinopyranosyl di-trans,octa-cis-undecaprenyl phosphate + UDP. It participates in glycolipid biosynthesis; 4-amino-4-deoxy-alpha-L-arabinose undecaprenyl phosphate biosynthesis; 4-amino-4-deoxy-alpha-L-arabinose undecaprenyl phosphate from UDP-4-deoxy-4-formamido-beta-L-arabinose and undecaprenyl phosphate: step 1/2. The protein operates within bacterial outer membrane biogenesis; lipopolysaccharide biosynthesis. Functionally, catalyzes the transfer of 4-deoxy-4-formamido-L-arabinose from UDP to undecaprenyl phosphate. The modified arabinose is attached to lipid A and is required for resistance to polymyxin and cationic antimicrobial peptides. The polypeptide is Undecaprenyl-phosphate 4-deoxy-4-formamido-L-arabinose transferase (Aeromonas hydrophila subsp. hydrophila (strain ATCC 7966 / DSM 30187 / BCRC 13018 / CCUG 14551 / JCM 1027 / KCTC 2358 / NCIMB 9240 / NCTC 8049)).